The sequence spans 259 residues: UPF0246 protein PFLU_0992 (259 aa).

This sequence belongs to the UPF0246 family.

The protein is UPF0246 protein PFLU_0992 of Pseudomonas fluorescens (strain SBW25).